Consider the following 255-residue polypeptide: F-box/SPRY domain-containing protein 1 (255 aa).

The 49-residue stretch at 3–51 (DPVAALCNYNVLEVIFSYLELEDLSHCSQVCKSWYHFLNDENSDVWRWH) folds into the F-box domain. In terms of domain architecture, B30.2/SPRY spans 61 to 253 (LKSDLLSSVS…VSMVYLGTPL (193 aa)).

This sequence belongs to the FBXO45/Fsn family. Component of an E3 ubiquitin ligase complex composed of hiw and Fsn.

It localises to the synapse. It participates in protein modification; protein ubiquitination. Required in the presynaptic motoneuron to down-regulate the levels of wnd and restrain synaptic terminal growth at the neuromuscular junction (NMJ). The protein is F-box/SPRY domain-containing protein 1 of Drosophila erecta (Fruit fly).